Reading from the N-terminus, the 186-residue chain is Ribosome maturation factor RimM (186 aa).

The 72-residue stretch at 103-174 (PEEYHYSDLI…ELQVQPPPGL (72 aa)) folds into the PRC barrel domain.

The protein belongs to the RimM family. In terms of assembly, binds ribosomal protein uS19.

The protein resides in the cytoplasm. In terms of biological role, an accessory protein needed during the final step in the assembly of 30S ribosomal subunit, possibly for assembly of the head region. Essential for efficient processing of 16S rRNA. May be needed both before and after RbfA during the maturation of 16S rRNA. It has affinity for free ribosomal 30S subunits but not for 70S ribosomes. The chain is Ribosome maturation factor RimM from Synechococcus sp. (strain JA-3-3Ab) (Cyanobacteria bacterium Yellowstone A-Prime).